The primary structure comprises 240 residues: MSELSYRRILLKLSGEALMGDGDYGIDPKVINRLAHEVIEAQQAGAQVALVIGGGNIFRGAGLAASGMDRVTGDHMGMLATVINALAMQDALEKLGAKVRVMSAIKINDVCEDFIRRRAIRHLEKGRIAIFAAGTGNPFFTTDSGAALRAIEIGADLLLKATKVDGVYDKDPKKHTDAVRYDSLTYDRVILQGLEVMDTAAFALARDSDLPLRIFGMSEPGVLLRILHGEQIGTLVQGRS.

ATP is bound at residue 12–15; it reads KLSG. Residue G54 participates in UMP binding. ATP-binding residues include G55 and R59. UMP-binding positions include D74 and 135–142; that span reads TGNPFFTT. ATP-binding residues include T162, Y168, and D171.

The protein belongs to the UMP kinase family. Homohexamer.

It localises to the cytoplasm. It catalyses the reaction UMP + ATP = UDP + ADP. The protein operates within pyrimidine metabolism; CTP biosynthesis via de novo pathway; UDP from UMP (UMPK route): step 1/1. Its activity is regulated as follows. Inhibited by UTP. Functionally, catalyzes the reversible phosphorylation of UMP to UDP. The protein is Uridylate kinase of Xanthomonas axonopodis pv. citri (strain 306).